Consider the following 779-residue polypeptide: Protocadherin beta-8 (779 aa).

The first 28 residues, 1–28, serve as a signal peptide directing secretion; the sequence is METALTKTPEKRQVIFLAILLLLWEASS. The Extracellular portion of the chain corresponds to 29-690; sequence EAISYSMPEE…QEEDMLTLYL (662 aa). 5 Cadherin domains span residues 75 to 133, 134 to 242, 243 to 346, 347 to 450, and 451 to 560; these read LQLD…FPEF, PDTE…APQF, LQSL…APKL, TISS…APAF, and TQTS…APFV. A disulfide bridge links Cys96 with Cys102. The N-linked (GlcNAc...) asparagine glycan is linked to Asn169. Ser223 carries O-linked (Man) serine glycosylation. 2 O-linked (Man) threonine glycosylation sites follow: Thr225 and Thr227. Residue Asn417 is glycosylated (N-linked (GlcNAc...) asparagine). An N-linked (GlcNAc...) asparagine glycan is attached at Asn566. The region spanning 575 to 675 is the Cadherin 6 domain; the sequence is LPRAAEPGYL…SQPYLPLPEV (101 aa). The helical transmembrane segment at 691–711 threads the bilayer; sequence VIALASVSSLFLLSVLLFVGV. The Cytoplasmic portion of the chain corresponds to 712 to 779; sequence KLCKKAREAS…IIPSSLLQDS (68 aa).

Forms homodimers in trans (molecules expressed by two different cells). Forms promiscuous heterodimers in cis (at the plasma membrane of the same cell) with other protocadherins.

It localises to the cell membrane. Calcium-dependent cell-adhesion protein involved in cells self-recognition and non-self discrimination. Thereby, it is involved in the establishment and maintenance of specific neuronal connections in the brain. This Mus musculus (Mouse) protein is Protocadherin beta-8.